The following is a 223-amino-acid chain: Endonuclease V (223 aa).

Residues aspartate 35 and aspartate 103 each coordinate Mg(2+).

The protein belongs to the endonuclease V family. Mg(2+) is required as a cofactor.

The protein resides in the cytoplasm. It catalyses the reaction Endonucleolytic cleavage at apurinic or apyrimidinic sites to products with a 5'-phosphate.. In terms of biological role, DNA repair enzyme involved in the repair of deaminated bases. Selectively cleaves double-stranded DNA at the second phosphodiester bond 3' to a deoxyinosine leaving behind the intact lesion on the nicked DNA. The chain is Endonuclease V from Salmonella agona (strain SL483).